Reading from the N-terminus, the 58-residue chain is MPSVKVRVGEPVDRALRILKKKIDKEGILKAAKSHRFYDKPSVKKRAKSKAAAKYRSR.

The interval 39–58 (DKPSVKKRAKSKAAAKYRSR) is disordered. Residues 43 to 58 (VKKRAKSKAAAKYRSR) show a composition bias toward basic residues.

This sequence belongs to the bacterial ribosomal protein bS21 family.

In Chlamydia pneumoniae (Chlamydophila pneumoniae), this protein is Small ribosomal subunit protein bS21 (rpsU).